The following is a 335-amino-acid chain: MRPILLQGHERALTQIRYNKDGDIIFSTAKDQHICAWYAHNGERLGTYHGHQGAIWTVDVDPTTTIIASGAADNTVRLWDVKTGKCLKTWDFNTAVKRVEFNEDATQLLAVTEQRMGFLGTIVVLDINLDVNGPQSDDRALTITCAESKATVAGWSYMSKYIIAGHEDGSVSQYDSKTGELLFNTQVHEPDLQVTDLQWSPDRTYFITASKDKTAKLVNARDLEVMKTYVTDTPLNSASITPKKDFVILGGGQAAMDVTTTSARQGKFEARFYHKIFEEEIGRVRGHFGPLNTVAVDPNGKGYASGGEDGYVRVHQFDKGYFDFTYEVERQVRQQ.

WD repeat units follow at residues 8–47 (GHERALTQIRYNKDGDIIFSTAKDQHICAWYAHNGERLGT), 50–91 (GHQG…KTWD), 145–184 (CAESKATVAGWSYMSKYIIAGHEDGSVSQYDSKTGELLFN), 189–228 (EPDLQVTDLQWSPDRTYFITASKDKTAKLVNARDLEVMKT), and 286–325 (GHFGPLNTVAVDPNGKGYASGGEDGYVRVHQFDKGYFDFT).

It belongs to the eIF-3 subunit I family. As to quaternary structure, component of the eukaryotic translation initiation factor 3 (eIF-3) complex.

The protein resides in the cytoplasm. Functionally, component of the eukaryotic translation initiation factor 3 (eIF-3) complex, which is involved in protein synthesis of a specialized repertoire of mRNAs and, together with other initiation factors, stimulates binding of mRNA and methionyl-tRNAi to the 40S ribosome. The eIF-3 complex specifically targets and initiates translation of a subset of mRNAs involved in cell proliferation. This Sclerotinia sclerotiorum (strain ATCC 18683 / 1980 / Ss-1) (White mold) protein is Eukaryotic translation initiation factor 3 subunit I (tif34).